A 154-amino-acid polypeptide reads, in one-letter code: Snaclec EMS16 subunit beta (154 aa).

An N-terminal signal peptide occupies residues 1-26 (MGRLISVRFSLLVVFLSLSGIGAGLC). Cysteines 27 and 38 form a disulfide. The C-type lectin domain occupies 34 to 147 (FDQHCYKVFE…CEKSVSFVCK (114 aa)). A glycan (N-linked (GlcNAc...) asparagine) is linked at N47. 2 disulfides stabilise this stretch: C55/C146 and C121/C138.

It belongs to the snaclec family. In terms of assembly, heterodimer of subunits A and B; disulfide-linked. Expressed by the venom gland.

It is found in the secreted. Functionally, EMS16 is a potent and selective inhibitor of alpha-2/beta-1 (ITGA2/ITGB1) integrin and acts as a potent antagonist of platelet aggregation and cell migration. Binds specifically to the I domain of the alpha-2 subunit, in a metal ion-independent fashion. This Echis multisquamatus (Central Asian sand viper) protein is Snaclec EMS16 subunit beta.